A 413-amino-acid chain; its full sequence is Clusterin-associated protein 1 (413 aa).

Residues 198-291 are a coiled coil; the sequence is KTKDLLNNVA…ERFEEAKNTL (94 aa). A disordered region spans residues 305–413; that stretch reads LLKSGSNDDS…EPLDESDNDF (109 aa). Acidic residues-rich tracts occupy residues 312 to 328 and 360 to 388; these read DDSD…DSEL and DSDD…EDES. A phosphoserine mark is found at serine 314, serine 324, and serine 326. At serine 409 the chain carries Phosphoserine.

Belongs to the CLUAP1 family. Interacts with CLU/clusterin. Interacts with UBXN10; the interaction is direct. As to expression, expressed in testis, thyroid and trachea and to a lower extent in spinal cord and adrenal gland. Highly expressed in colon cancer and osteosarcoma cell lines.

It localises to the cell projection. The protein resides in the cilium. Its subcellular location is the nucleus. Required for cilia biogenesis. Appears to function within the multiple intraflagellar transport complex B (IFT-B). Key regulator of hedgehog signaling. In Homo sapiens (Human), this protein is Clusterin-associated protein 1 (CLUAP1).